Consider the following 299-residue polypeptide: Putative pyrroline-5-carboxylate reductase 4 (299 aa).

Belongs to the pyrroline-5-carboxylate reductase family.

The enzyme catalyses L-proline + NADP(+) = (S)-1-pyrroline-5-carboxylate + NADPH + 2 H(+). The catalysed reaction is L-proline + NAD(+) = (S)-1-pyrroline-5-carboxylate + NADH + 2 H(+). It functions in the pathway amino-acid biosynthesis; L-proline biosynthesis; L-proline from L-glutamate 5-semialdehyde: step 1/1. The chain is Putative pyrroline-5-carboxylate reductase 4 from Caenorhabditis elegans.